A 385-amino-acid chain; its full sequence is Queuine tRNA-ribosyltransferase (385 aa).

The active-site Proton acceptor is D92. Substrate-binding positions include D92–F96, D146, Q188, and G215. The RNA binding stretch occupies residues G246 to D252. D265 serves as the catalytic Nucleophile. The RNA binding; important for wobble base 34 recognition stretch occupies residues T270–R274. Zn(2+) contacts are provided by C303, C305, C308, and H334.

Belongs to the queuine tRNA-ribosyltransferase family. Homodimer. Within each dimer, one monomer is responsible for RNA recognition and catalysis, while the other monomer binds to the replacement base PreQ1. It depends on Zn(2+) as a cofactor.

It carries out the reaction 7-aminomethyl-7-carbaguanine + guanosine(34) in tRNA = 7-aminomethyl-7-carbaguanosine(34) in tRNA + guanine. The protein operates within tRNA modification; tRNA-queuosine biosynthesis. In terms of biological role, catalyzes the base-exchange of a guanine (G) residue with the queuine precursor 7-aminomethyl-7-deazaguanine (PreQ1) at position 34 (anticodon wobble position) in tRNAs with GU(N) anticodons (tRNA-Asp, -Asn, -His and -Tyr). Catalysis occurs through a double-displacement mechanism. The nucleophile active site attacks the C1' of nucleotide 34 to detach the guanine base from the RNA, forming a covalent enzyme-RNA intermediate. The proton acceptor active site deprotonates the incoming PreQ1, allowing a nucleophilic attack on the C1' of the ribose to form the product. After dissociation, two additional enzymatic reactions on the tRNA convert PreQ1 to queuine (Q), resulting in the hypermodified nucleoside queuosine (7-(((4,5-cis-dihydroxy-2-cyclopenten-1-yl)amino)methyl)-7-deazaguanosine). The protein is Queuine tRNA-ribosyltransferase of Thermus thermophilus (strain ATCC 27634 / DSM 579 / HB8).